A 248-amino-acid chain; its full sequence is Deoxyribose-phosphate aldolase (248 aa).

Asp117 serves as the catalytic Proton donor/acceptor. The active-site Schiff-base intermediate with acetaldehyde is the Lys179. The Proton donor/acceptor role is filled by Lys208.

It belongs to the DeoC/FbaB aldolase family. DeoC type 1 subfamily.

Its subcellular location is the cytoplasm. It carries out the reaction 2-deoxy-D-ribose 5-phosphate = D-glyceraldehyde 3-phosphate + acetaldehyde. It participates in carbohydrate degradation; 2-deoxy-D-ribose 1-phosphate degradation; D-glyceraldehyde 3-phosphate and acetaldehyde from 2-deoxy-alpha-D-ribose 1-phosphate: step 2/2. Catalyzes a reversible aldol reaction between acetaldehyde and D-glyceraldehyde 3-phosphate to generate 2-deoxy-D-ribose 5-phosphate. This chain is Deoxyribose-phosphate aldolase, found in Thermotoga maritima (strain ATCC 43589 / DSM 3109 / JCM 10099 / NBRC 100826 / MSB8).